A 212-amino-acid chain; its full sequence is Floral homeotic protein PMADS 2 (212 aa).

Positions 3–58 (RGKIEIKRIENSSNRQVTYSKRRNGIIKKAKEITVLCDAKVSLIIFGNSGKMHEYC) constitute an MADS-box domain. One can recognise a K-box domain in the interval 84–170 (HENLSNEIDR…QYALHQKEMA (87 aa)).

Predominantly expressed in petals and stamens, less in carpels and sepals.

The protein localises to the nucleus. Transcription factor involved in the genetic control of flower development. This chain is Floral homeotic protein PMADS 2 (PMADS2), found in Petunia hybrida (Petunia).